Here is a 607-residue protein sequence, read N- to C-terminus: Elongation factor 4 (607 aa).

One can recognise a tr-type G domain in the interval 11-193 (EKIRNFSIIA…QIVEKVPAPQ (183 aa)). GTP-binding positions include 23-28 (DHGKST) and 140-143 (NKID).

The protein belongs to the TRAFAC class translation factor GTPase superfamily. Classic translation factor GTPase family. LepA subfamily.

Its subcellular location is the cell membrane. The catalysed reaction is GTP + H2O = GDP + phosphate + H(+). In terms of biological role, required for accurate and efficient protein synthesis under certain stress conditions. May act as a fidelity factor of the translation reaction, by catalyzing a one-codon backward translocation of tRNAs on improperly translocated ribosomes. Back-translocation proceeds from a post-translocation (POST) complex to a pre-translocation (PRE) complex, thus giving elongation factor G a second chance to translocate the tRNAs correctly. Binds to ribosomes in a GTP-dependent manner. The sequence is that of Elongation factor 4 from Lactococcus lactis subsp. cremoris (strain SK11).